A 270-amino-acid polypeptide reads, in one-letter code: MSPGSGVKSEYMKRYQEPRWEEYGPCYRELLHYRLGRRLLEQAHAPWLWDDWGPAGSSEDSASSESSGAGGPAPRCAPPSPPPPVEPATQEEAERRARGAPEEQDAEAGDAEAEDAEDAALPALPVKDVEDKPEQQTRTRETDKSPTSTEPRQQPSALFARGNRKAVKSPQRSSSKIKENKHPFALYGWGEKQTDTGSQKTHNVCASAPVHEIHESALRAKNRRQVEKRKLVAQRQRAHSVDVEKNRKMKASSSENPWMTEYMRCYSARA.

The residue at position 1 (M1) is an N-acetylmethionine. The short motif at 9–15 (SEYMKRY) is the ST]-E-Y-X(3)-Y motif 1; required for efficient microtubule binding and stabilization element. 2 disordered regions span residues 50-201 (DDWG…SQKT) and 231-255 (LVAQ…SSSE). A compositionally biased stretch (low complexity) spans 53-67 (GPAGSSEDSASSESS). The segment covering 75-86 (RCAPPSPPPPVE) has biased composition (pro residues). Residues 92–101 (EAERRARGAP) are compositionally biased toward basic and acidic residues. Over residues 102–118 (EEQDAEAGDAEAEDAED) the composition is skewed to acidic residues. Basic and acidic residues predominate over residues 127–144 (KDVEDKPEQQTRTRETDK). A compositionally biased stretch (polar residues) spans 145–156 (SPTSTEPRQQPS). Positions 260 to 266 (TEYMRCY) match the ST]-E-Y-X(3)-Y motif 2; required for efficient microtubule binding and stabilization motif.

This sequence belongs to the CCSAP family. Associates with microtubules; the association occurs on polyglutamylated tubulin.

The protein localises to the cytoplasm. The protein resides in the cytoskeleton. It localises to the microtubule organizing center. It is found in the centrosome. Its subcellular location is the centriole. The protein localises to the spindle. The protein resides in the cilium basal body. It localises to the cilium axoneme. It is found in the cell projection. Its subcellular location is the axon. The protein localises to the cilium. Functionally, plays a role in microtubule (MT) stabilization and this stabilization involves the maintenance of NUMA1 at the spindle poles. Colocalizes with polyglutamylated MTs to promote MT stabilization and regulate bipolar spindle formation in mitosis. Binding of CCSAP to centrosomes and the spindle around centrosomes during mitosis inhibits MT depolymerization, thereby stabilizing the mitotic spindle. May play a role in embryonic development. May be required for proper cilia beating. This Homo sapiens (Human) protein is Centriole, cilia and spindle-associated protein (CCSAP).